The sequence spans 540 residues: E3 ubiquitin-protein ligase rnf8-A (540 aa).

An FHA domain is found at 30–84 (VTLGRGLGVTYQLKPTLCPLMISRTHCLFKQNTGGEWTVTDNKSLNGVWRNKERL). The disordered stretch occupies residues 128–205 (LIRPLPDKTK…SGTESRLNDS (78 aa)). Polar residues-rich tracts occupy residues 152–162 (ASGNEGPSNFS) and 179–200 (SSHT…GTES). The RING-type zinc-finger motif lies at 382–420 (CIICSEHFIEAVTLNCAHSFCSYCIKSWKKRKEECPICR). Residues 517–540 (GTDELDSSDFESDDDEEEDSFLII) are disordered. Residues 519 to 540 (DELDSSDFESDDDEEEDSFLII) are compositionally biased toward acidic residues.

Belongs to the RNF8 family. In terms of assembly, homodimer. Forms a E2-E3 ubiquitin ligase complex composed of the rnf8 homodimer and a E2 heterodimer of ube2n and ube2v2.

It is found in the nucleus. It carries out the reaction S-ubiquitinyl-[E2 ubiquitin-conjugating enzyme]-L-cysteine + [acceptor protein]-L-lysine = [E2 ubiquitin-conjugating enzyme]-L-cysteine + N(6)-ubiquitinyl-[acceptor protein]-L-lysine.. It functions in the pathway protein modification; protein ubiquitination. E3 ubiquitin-protein ligase that plays a key role in DNA damage signaling via 2 distinct roles: by mediating the 'Lys-63'-linked ubiquitination of histones H2A and H2AX and promoting the recruitment of DNA repair proteins at double-strand breaks (DSBs) sites, and by catalyzing 'Lys-48'-linked ubiquitination to remove target proteins from DNA damage sites. Following DNA DSBs, it is recruited to the sites of damage by ATM-phosphorylated mdc1 and catalyzes the 'Lys-63'-linked ubiquitination of histones H2A and H2AX, thereby promoting the formation of tp53bp1 and brca1 ionizing radiation-induced foci (IRIF). H2A ubiquitination also mediates the ATM-dependent transcriptional silencing at regions flanking DSBs in cis, a mechanism to avoid collision between transcription and repair intermediates. Also catalyzes the formation of 'Lys-48'-linked polyubiquitin chains, leading to degradation of substrate proteins. In addition to its function in damage signaling, also plays a role in higher-order chromatin structure by mediating extensive chromatin decondensation. The polypeptide is E3 ubiquitin-protein ligase rnf8-A (Xenopus laevis (African clawed frog)).